The sequence spans 167 residues: Crossover junction endodeoxyribonuclease RuvC (167 aa).

Active-site residues include Asp-11, Glu-71, and Asp-143. Residues Asp-11, Glu-71, and Asp-143 each contribute to the Mg(2+) site.

This sequence belongs to the RuvC family. Homodimer which binds Holliday junction (HJ) DNA. The HJ becomes 2-fold symmetrical on binding to RuvC with unstacked arms; it has a different conformation from HJ DNA in complex with RuvA. In the full resolvosome a probable DNA-RuvA(4)-RuvB(12)-RuvC(2) complex forms which resolves the HJ. Requires Mg(2+) as cofactor.

Its subcellular location is the cytoplasm. It catalyses the reaction Endonucleolytic cleavage at a junction such as a reciprocal single-stranded crossover between two homologous DNA duplexes (Holliday junction).. The RuvA-RuvB-RuvC complex processes Holliday junction (HJ) DNA during genetic recombination and DNA repair. Endonuclease that resolves HJ intermediates. Cleaves cruciform DNA by making single-stranded nicks across the HJ at symmetrical positions within the homologous arms, yielding a 5'-phosphate and a 3'-hydroxyl group; requires a central core of homology in the junction. The consensus cleavage sequence is 5'-(A/T)TT(C/G)-3'. Cleavage occurs on the 3'-side of the TT dinucleotide at the point of strand exchange. HJ branch migration catalyzed by RuvA-RuvB allows RuvC to scan DNA until it finds its consensus sequence, where it cleaves and resolves the cruciform DNA. The polypeptide is Crossover junction endodeoxyribonuclease RuvC (Bartonella bacilliformis (strain ATCC 35685 / KC583 / Herrer 020/F12,63)).